The sequence spans 247 residues: 3-deoxy-manno-octulosonate cytidylyltransferase (247 aa).

Belongs to the KdsB family.

It is found in the cytoplasm. The enzyme catalyses 3-deoxy-alpha-D-manno-oct-2-ulosonate + CTP = CMP-3-deoxy-beta-D-manno-octulosonate + diphosphate. The protein operates within nucleotide-sugar biosynthesis; CMP-3-deoxy-D-manno-octulosonate biosynthesis; CMP-3-deoxy-D-manno-octulosonate from 3-deoxy-D-manno-octulosonate and CTP: step 1/1. Its pathway is bacterial outer membrane biogenesis; lipopolysaccharide biosynthesis. In terms of biological role, activates KDO (a required 8-carbon sugar) for incorporation into bacterial lipopolysaccharide in Gram-negative bacteria. The polypeptide is 3-deoxy-manno-octulosonate cytidylyltransferase (Afipia carboxidovorans (strain ATCC 49405 / DSM 1227 / KCTC 32145 / OM5) (Oligotropha carboxidovorans)).